Here is a 621-residue protein sequence, read N- to C-terminus: Chaperone protein HscA homolog (621 aa).

The protein belongs to the heat shock protein 70 family.

Its function is as follows. Chaperone involved in the maturation of iron-sulfur cluster-containing proteins. Has a low intrinsic ATPase activity which is markedly stimulated by HscB. This Cupriavidus taiwanensis (strain DSM 17343 / BCRC 17206 / CCUG 44338 / CIP 107171 / LMG 19424 / R1) (Ralstonia taiwanensis (strain LMG 19424)) protein is Chaperone protein HscA homolog.